The primary structure comprises 467 residues: Ribulose bisphosphate carboxylase large chain (467 aa).

The residue at position 5 (lysine 5) is an N6,N6,N6-trimethyllysine. 2 residues coordinate substrate: asparagine 114 and threonine 164. The active-site Proton acceptor is the lysine 166. Residue lysine 168 coordinates substrate. Lysine 192, aspartate 194, and glutamate 195 together coordinate Mg(2+). Lysine 192 is subject to N6-carboxylysine. The Proton acceptor role is filled by histidine 285. Substrate-binding residues include arginine 286, histidine 318, and serine 370.

The protein belongs to the RuBisCO large chain family. Type I subfamily. In terms of assembly, heterohexadecamer of 8 large chains and 8 small chains; disulfide-linked. The disulfide link is formed within the large subunit homodimers. It depends on Mg(2+) as a cofactor. Post-translationally, the disulfide bond which can form in the large chain dimeric partners within the hexadecamer appears to be associated with oxidative stress and protein turnover.

The protein localises to the plastid. Its subcellular location is the chloroplast. It carries out the reaction 2 (2R)-3-phosphoglycerate + 2 H(+) = D-ribulose 1,5-bisphosphate + CO2 + H2O. The catalysed reaction is D-ribulose 1,5-bisphosphate + O2 = 2-phosphoglycolate + (2R)-3-phosphoglycerate + 2 H(+). Its function is as follows. RuBisCO catalyzes two reactions: the carboxylation of D-ribulose 1,5-bisphosphate, the primary event in carbon dioxide fixation, as well as the oxidative fragmentation of the pentose substrate in the photorespiration process. Both reactions occur simultaneously and in competition at the same active site. This is Ribulose bisphosphate carboxylase large chain from Hydrophyllum virginianum (Eastern waterleaf).